Reading from the N-terminus, the 557-residue chain is CCR4-NOT transcription complex subunit 6 (557 aa).

4 LRR repeats span residues 52 to 73 (HLTA…IAKL), 75 to 96 (NLVY…LGNM), 98 to 120 (SLRE…GKLF), and 121 to 143 (QLQT…CLEP). Residues 153–557 (LLDNLSGTAK…VNGIHLPGRR (405 aa)) are nuclease domain. Glu240 contacts Mg(2+). Substrate is bound by residues Glu240, Glu276, His361, and Pro366. Mg(2+) is bound at residue Asp412. The Proton donor/acceptor role is filled by Asp412. Substrate contacts are provided by Asn414, Asn481, and Phe486.

The protein belongs to the CCR4/nocturin family. Component of the CCR4-NOT complex; distinct complexes seem to exist that differ in the participation of probably mutually exclusive catalytic subunits; the complex contains two deadenylase subunits, CNOT6 or CNOT6L, and CNOT7 or CNOT8. Interacts with CNOT7 and CNOT8. Interacts with UNR. Interacts with ZFP36L1 (via N-terminus). Interacts with ZNF335. Mg(2+) is required as a cofactor.

Its subcellular location is the cytoplasm. The protein localises to the nucleus. It catalyses the reaction Exonucleolytic cleavage of poly(A) to 5'-AMP.. Poly(A) nuclease with 3'-5' RNase activity. Catalytic component of the CCR4-NOT complex which is one of the major cellular mRNA deadenylases and is linked to various cellular processes including bulk mRNA degradation, miRNA-mediated repression, translational repression during translational initiation and general transcription regulation. Additional complex functions may be a consequence of its influence on mRNA expression. Involved in mRNA decay mediated by the major-protein-coding determinant of instability (mCRD) of the FOS gene in the cytoplasm. In the presence of ZNF335, enhances ligand-dependent transcriptional activity of nuclear hormone receptors. Mediates cell proliferation and cell survival and prevents cellular senescence. In Mus musculus (Mouse), this protein is CCR4-NOT transcription complex subunit 6 (Cnot6).